The sequence spans 2890 residues: Bifunctional DNA-directed RNA polymerase subunit beta-beta' (2890 aa).

A DNA-directed RNA polymerase subunit beta region spans residues 1–1377 (MSKKIPLKNR…DINIFGDEMD (1377 aa)). Residues 1384 to 2890 (PIVIKEDDRP…LRTIEDSPKI (1507 aa)) form a DNA-directed RNA polymerase subunit beta' region. Residues Cys-1449, Cys-1451, Cys-1465, and Cys-1468 each contribute to the Zn(2+) site. Mg(2+)-binding residues include Asp-1849, Asp-1851, and Asp-1853. The Zn(2+) site is built by Cys-2179, Cys-2253, Cys-2260, and Cys-2263.

The protein in the N-terminal section; belongs to the RNA polymerase beta chain family. This sequence in the C-terminal section; belongs to the RNA polymerase beta' chain family. As to quaternary structure, the RNAP catalytic core consists of 2 alpha, 1 beta/beta' and 1 omega subunit. When a sigma factor is associated with the core the holoenzyme is formed, which can initiate transcription. Mg(2+) is required as a cofactor. Requires Zn(2+) as cofactor.

The catalysed reaction is RNA(n) + a ribonucleoside 5'-triphosphate = RNA(n+1) + diphosphate. DNA-dependent RNA polymerase catalyzes the transcription of DNA into RNA using the four ribonucleoside triphosphates as substrates. The sequence is that of Bifunctional DNA-directed RNA polymerase subunit beta-beta' (rpoBC) from Helicobacter acinonychis (strain Sheeba).